The following is a 361-amino-acid chain: Probable U3 small nucleolar RNA-associated protein 11 (361 aa).

Disordered regions lie at residues 1–52 (MTKG…KKRK), 200–235 (LMSG…TPET), 262–295 (KRES…TRLL), and 311–361 (RHVR…RRAR). A compositionally biased stretch (basic residues) spans 17–33 (HLKRKTHLERSQPKSRQ). 2 stretches are compositionally biased toward basic and acidic residues: residues 37 to 46 (QLEKHKDHVL) and 217 to 228 (RREVQEKMRRSG). Residues 278–287 (DDGEQEEAAA) are compositionally biased toward acidic residues. The span at 342 to 352 (RQMEQRRESRF) shows a compositional bias: basic and acidic residues.

Belongs to the UTP11 family. In terms of assembly, component of the ribosomal small subunit (SSU) processome.

Its subcellular location is the nucleus. The protein localises to the nucleolus. Its function is as follows. Involved in nucleolar processing of pre-18S ribosomal RNA. The polypeptide is Probable U3 small nucleolar RNA-associated protein 11 (Leishmania major).